We begin with the raw amino-acid sequence, 99 residues long: NADH-ubiquinone oxidoreductase chain 4L (99 aa).

Helical transmembrane passes span 2 to 22 (YYRY…GIVL), 27 to 47 (LIIM…LFLI), and 59 to 79 (VFTI…LAIM).

This sequence belongs to the complex I subunit 4L family.

Its subcellular location is the mitochondrion membrane. The enzyme catalyses a ubiquinone + NADH + 5 H(+)(in) = a ubiquinol + NAD(+) + 4 H(+)(out). Core subunit of the mitochondrial membrane respiratory chain NADH dehydrogenase (Complex I) that is believed to belong to the minimal assembly required for catalysis. Complex I functions in the transfer of electrons from NADH to the respiratory chain. The immediate electron acceptor for the enzyme is believed to be ubiquinone. The sequence is that of NADH-ubiquinone oxidoreductase chain 4L (ND4L) from Metridium senile (Brown sea anemone).